We begin with the raw amino-acid sequence, 226 residues long: Probable endolytic peptidoglycan transglycosylase RlpA (226 aa).

The signal sequence occupies residues 1 to 26 (MERFLGFRTPLGALGVVILLTLILSS). A lipid anchor (N-palmitoyl cysteine) is attached at Cys27. A lipid anchor (S-diacylglycerol cysteine) is attached at Cys27.

This sequence belongs to the RlpA family.

Its subcellular location is the cell membrane. Functionally, lytic transglycosylase with a strong preference for naked glycan strands that lack stem peptides. This is Probable endolytic peptidoglycan transglycosylase RlpA from Aquifex aeolicus (strain VF5).